Consider the following 358-residue polypeptide: Snurportin-1 (358 aa).

N-acetylmethionine is present on Met1. Disordered stretches follow at residues 1 to 39 and 69 to 89; these read MEEL…SSLE and DWTG…EMDL. The necessary for interaction with KPNB1 and m3G-cap U1 and U5 snRNP import receptor activity stretch occupies residues 1 to 65; sequence MEELSQALAS…LDYVNHARRL (65 aa). The interval 1-160 is necessary for interaction with XPO1; the sequence is MEELSQALAS…NRFSSLLPGG (160 aa). Composition is skewed to polar residues over residues 7–22 and 30–39; these read ALAS…NSTA and QYKSKYSSLE. The IBB domain occupies 11–73; the sequence is SFSVSQELNS…RLAEDDWTGM (63 aa). A Phosphoserine modification is found at Ser75. Residues 128 to 130 are interaction with m3G-cap structure; the sequence is GKR. Positions 210 to 329 are necessary for binding to the m3G-cap structure; sequence MNSKLPEEEG…DTKEKLTHKA (120 aa). The span at 315-341 shows a compositional bias: basic and acidic residues; that stretch reads KRSQEDTKEKLTHKASENGHYELEHLS. The tract at residues 315–358 is disordered; it reads KRSQEDTKEKLTHKASENGHYELEHLSTPKLRSPPHSSESLMDS. The span at 349 to 358 shows a compositional bias: polar residues; it reads PHSSESLMDS. Residue Ser351 is modified to Phosphoserine.

The protein belongs to the snurportin family. As to quaternary structure, component of an import snRNP complex composed of KPNB1, SNUPN, SMN1 and ZNF259. Component of a nuclear export receptor complex composed of KPNB1, Ran, SNUPN and XPO1. Found in a trimeric export complex with SNUPN, Ran and XPO1. Interacts (via IBB domain) with KPNB1; the interaction is direct. Interacts with DDX20, IPO7, SMN1, SNRPB and XPO1. Interacts directly with XPO1. Its interaction with XPO1 and binding to m3G-cap U snRNPs appears to be mutually exclusive. Can form homomers.

It localises to the nucleus. The protein resides in the cytoplasm. Functions as an U snRNP-specific nuclear import adapter. Involved in the trimethylguanosine (m3G)-cap-dependent nuclear import of U snRNPs. Binds specifically to the terminal m3G-cap U snRNAs. The protein is Snurportin-1 (Snupn) of Rattus norvegicus (Rat).